Here is a 150-residue protein sequence, read N- to C-terminus: Transcriptional repressor NrdR (150 aa).

A zinc finger spans residues 3-34; sequence CPFCGQLDSKVVDSRPDKGGAAIRRRRECESC. Residues 49–139 form the ATP-cone domain; it reads PLVLKKDGRR…VYRSFKDVNE (91 aa).

The protein belongs to the NrdR family. It depends on Zn(2+) as a cofactor.

Functionally, negatively regulates transcription of bacterial ribonucleotide reductase nrd genes and operons by binding to NrdR-boxes. The chain is Transcriptional repressor NrdR from Geobacter sulfurreducens (strain ATCC 51573 / DSM 12127 / PCA).